The chain runs to 720 residues: Inactive serine protease PAMR1 (720 aa).

A signal peptide spans 1-21; sequence MELGCWTQLGLTFLQLLLISS. 8 cysteine pairs are disulfide-bonded: Cys128-Cys150, Cys177-Cys199, Cys239-Cys250, Cys244-Cys260, Cys262-Cys271, Cys280-Cys329, Cys315-Cys342, and Cys414-Cys442. A CUB domain is found at 128-236; that stretch reads CGQVLRAPKG…DGFHAIFEEI (109 aa). The EGF-like domain occupies 235 to 272; sequence EITACSSSPCFHDGTCVLDKAGSYKCACLAGYTGQRCE. 2 consecutive Sushi domains span residues 278–344 and 387–444; these read RNCS…ICIK and APTK…SCIP. A Peptidase S1 domain is found at 445–720; the sequence is ICGKIENVTA…FKDWIERNMK (276 aa). Residue Asn451 is glycosylated (N-linked (GlcNAc...) asparagine). Cys489 and Cys505 are joined by a disulfide. The N-linked (GlcNAc...) asparagine glycan is linked to Asn614. 2 disulfides stabilise this stretch: Cys630/Cys649 and Cys661/Cys697.

It belongs to the peptidase S1 family.

It is found in the secreted. Functionally, may play a role in regeneration of skeletal muscle. The chain is Inactive serine protease PAMR1 (PAMR1) from Pongo abelii (Sumatran orangutan).